The sequence spans 148 residues: FAD synthase (148 aa).

Residues 9–10 (TF), 14–17 (HPGH), Asn-92, and Tyr-119 each bind ATP.

Belongs to the archaeal FAD synthase family. As to quaternary structure, homodimer. A divalent metal cation serves as cofactor.

It carries out the reaction FMN + ATP + H(+) = FAD + diphosphate. It functions in the pathway cofactor biosynthesis; FAD biosynthesis; FAD from FMN: step 1/1. Functionally, catalyzes the transfer of the AMP portion of ATP to flavin mononucleotide (FMN) to produce flavin adenine dinucleotide (FAD) coenzyme. This chain is FAD synthase, found in Methanolacinia petrolearia (strain DSM 11571 / OCM 486 / SEBR 4847) (Methanoplanus petrolearius).